Here is a 128-residue protein sequence, read N- to C-terminus: Sm-like protein LSM1B (128 aa).

Residues 10 to 85 (YLSTSLASYL…VVLIGELDTE (76 aa)) form the Sm domain.

The protein belongs to the snRNP Sm proteins family. Component of the heptameric LSM1-LSM7 complex that forms a seven-membered ring structure with a donut shape. The LSM subunits are arranged in the order LSM1, LSM2, LSM3, LSM6, LSM5, LSM7 and LSM4. LSM1B subunit interacts only with its two neighboring subunits, LSM2 and LSM4. Expressed in roots, leaves, stems, flowers and siliques.

The protein resides in the cytoplasm. Its subcellular location is the P-body. Functionally, component of the cytoplasmic LSM1-LSM7 complex which is involved in mRNA degradation by promoting decapping and leading to accurate 5'-3' mRNA decay. LSM1A and LSM1B are essential for the formation of the cytoplasmic LSM1-LSM7 complex which regulates developmental gene expression by the decapping of specific development-related transcripts. Required for P-body formation during heat stress. The chain is Sm-like protein LSM1B from Arabidopsis thaliana (Mouse-ear cress).